The primary structure comprises 92 residues: Small ribosomal subunit protein uS19 (92 aa).

The protein belongs to the universal ribosomal protein uS19 family.

In terms of biological role, protein S19 forms a complex with S13 that binds strongly to the 16S ribosomal RNA. The sequence is that of Small ribosomal subunit protein uS19 from Neisseria gonorrhoeae (strain ATCC 700825 / FA 1090).